A 220-amino-acid polypeptide reads, in one-letter code: Ras-related protein Rab-3 (220 aa).

14 residues coordinate GTP: S30, G33, K34, T35, S36, T47, S48, S52, T53, G79, N134, D137, A165, and K166. Residue T35 coordinates Mg(2+). The Effector region signature appears at 50–58 (FVSTVGIDF). Position 53 (T53) interacts with Mg(2+). The segment at 194–220 (PTLVGGGQKGQRLTDQPQGTPNANCNC) is disordered. Residues 204 to 220 (QRLTDQPQGTPNANCNC) show a composition bias toward polar residues. S-geranylgeranyl cysteine attachment occurs at residues C218 and C220. The residue at position 220 (C220) is a Cysteine methyl ester.

The protein belongs to the small GTPase superfamily. Rab family. In terms of assembly, interacts with Rph.

Its subcellular location is the cytoplasmic vesicle. It localises to the secretory vesicle. It is found in the synaptic vesicle. Involved in exocytosis by regulating a late step in synaptic vesicle fusion. Could play a role in neurotransmitter release by regulating membrane flow in the nerve terminal. This is Ras-related protein Rab-3 (Rab3) from Drosophila melanogaster (Fruit fly).